The sequence spans 355 residues: Elongation factor Ts (355 aa).

Positions 82–85 (TDFV) are involved in Mg(2+) ion dislocation from EF-Tu.

The protein belongs to the EF-Ts family.

It localises to the cytoplasm. Functionally, associates with the EF-Tu.GDP complex and induces the exchange of GDP to GTP. It remains bound to the aminoacyl-tRNA.EF-Tu.GTP complex up to the GTP hydrolysis stage on the ribosome. The sequence is that of Elongation factor Ts (tsf) from Helicobacter pylori (strain J99 / ATCC 700824) (Campylobacter pylori J99).